Reading from the N-terminus, the 150-residue chain is Large ribosomal subunit protein bL9 (150 aa).

This sequence belongs to the bacterial ribosomal protein bL9 family.

Binds to the 23S rRNA. This is Large ribosomal subunit protein bL9 from Shewanella baltica (strain OS155 / ATCC BAA-1091).